Here is a 1073-residue protein sequence, read N- to C-terminus: ATP-dependent helicase/deoxyribonuclease subunit B (1073 aa).

The protein belongs to the helicase family. AddB/RexB type 2 subfamily. In terms of assembly, heterodimer of AddA and RexB. The cofactor is Mg(2+).

Functionally, the heterodimer acts as both an ATP-dependent DNA helicase and an ATP-dependent, dual-direction single-stranded exonuclease. Recognizes the chi site generating a DNA molecule suitable for the initiation of homologous recombination. This subunit has 5' -&gt; 3' nuclease activity but not helicase activity. The chain is ATP-dependent helicase/deoxyribonuclease subunit B from Streptococcus equi subsp. zooepidemicus (strain H70).